The sequence spans 387 residues: 3-ketoacyl-CoA thiolase (387 aa).

Residue Cys91 is the Acyl-thioester intermediate of the active site. Residues His343 and Cys373 each act as proton acceptor in the active site.

This sequence belongs to the thiolase-like superfamily. Thiolase family. Heterotetramer of two alpha chains (FadB) and two beta chains (FadA).

The protein localises to the cytoplasm. The enzyme catalyses an acyl-CoA + acetyl-CoA = a 3-oxoacyl-CoA + CoA. The protein operates within lipid metabolism; fatty acid beta-oxidation. Catalyzes the final step of fatty acid oxidation in which acetyl-CoA is released and the CoA ester of a fatty acid two carbons shorter is formed. The protein is 3-ketoacyl-CoA thiolase of Shigella sonnei (strain Ss046).